Here is a 499-residue protein sequence, read N- to C-terminus: Circadian clock oscillator protein KaiC (499 aa).

KaiC domains follow at residues 1–243 (MQSS…VSVF) and 257–499 (VRIS…DERA). ATP is bound by residues glycine 45, threonine 46, glycine 47, lysine 48, threonine 49, serine 85, lysine 220, leucine 221, arginine 222, threonine 224, histidine 226, threonine 286, glycine 287, threonine 288, glycine 289, lysine 290, threonine 291, and leucine 292. Threonine 49 is a Mg(2+) binding site. Residue threonine 291 coordinates Mg(2+). Glutamate 314 contributes to the Mg(2+) binding site. Tryptophan 327 provides a ligand contact to ATP. Serine 427 carries the post-translational modification Phosphoserine; by autocatalysis. Threonine 428 is modified (phosphothreonine; by autocatalysis). Residues arginine 447, lysine 453, methionine 454, arginine 455, serine 457, histidine 459, and lysine 461 each coordinate ATP.

The protein belongs to the KaiC family. In terms of assembly, homohexamer; hexamerization is dependent on ATP-binding. Component of the KaiBC complex. KaiC interacts with SasA, activating its autokinase function and leading to RpaA activation. Mg(2+) serves as cofactor. In terms of processing, phosphorylated on serine and threonine residues by autocatalysis. Has a 4 step phosphorylation cycle; the autokinase acts first on Thr-428, then Ser-427. When Ser-427 is modified KaiC switches to an autophosphatase mode, acting first on phospho-Thr-428 then phospho-Ser-427.

It catalyses the reaction L-seryl-[protein] + ATP = O-phospho-L-seryl-[protein] + ADP + H(+). It carries out the reaction L-threonyl-[protein] + ATP = O-phospho-L-threonyl-[protein] + ADP + H(+). The catalysed reaction is ATP + H2O = ADP + phosphate + H(+). Its function is as follows. Central component of the KaiBC oscillator complex, which constitutes the main circadian regulator in cyanobacteria. Its composition changes during the circadian cycle to control KaiC phosphorylation. Autophosphorylates and has a weak ATPase activity; ATPase activity defines the circadian period. The chain is Circadian clock oscillator protein KaiC from Prochlorococcus marinus (strain MIT 9313).